The sequence spans 408 residues: UDP-N-acetylglucosamine--dolichyl-phosphate N-acetylglucosaminephosphotransferase (408 aa).

Topologically, residues 1–10 (MWAFPELPLP) are lumenal. The chain crosses the membrane as a helical span at residues 11 to 38 (LLVNLFGSLLGFVATVTLIPAFRSHFIA). Topologically, residues 39–58 (ARLCGQDLNKLSRQQIPESQ) are cytoplasmic. UDP-N-acetyl-alpha-D-glucosamine-binding positions include 44-46 (QDL) and Glu-56. The chain crosses the membrane as a helical span at residues 59–78 (GVICGAVFLIILFCFIPFPF). Residues 79–91 (LNCFVEEQCKAFP) lie on the Lumenal side of the membrane. A helical transmembrane segment spans residues 92–118 (HHEFVALIGALLAICCMIFLGFADDVL). Over 119–121 (NLP) the chain is Cytoplasmic. A helical membrane pass occupies residues 122–143 (WRHKLLLPTAASLPLLMVYFTN). Residue Lys-125 coordinates dolichyl phosphate. Topologically, residues 144-166 (FGNTTIVVPKPFRWILGLHLDLG) are lumenal. An N-linked (GlcNAc...) asparagine glycan is attached at Asn-146. Residues 167 to 186 (ILYYVYMGLLAVFCTNAINI) form a helical membrane-spanning segment. Position 178–186 (178–186 (VFCTNAINI)) interacts with dolichyl phosphate. Asn-185 is a Mg(2+) binding site. Topologically, residues 187–192 (LAGING) are cytoplasmic. Asn-191 provides a ligand contact to UDP-N-acetyl-alpha-D-glucosamine. The chain crosses the membrane as a helical span at residues 193-213 (LEAGQSLVISASIIVFNLVEL). Topologically, residues 214-218 (EGDYR) are lumenal. A helical transmembrane segment spans residues 219 to 242 (DDHVFSLYFMIPFFFTTLGLLYHN). The Cytoplasmic portion of the chain corresponds to 243 to 250 (WYPSQVFV). The chain crosses the membrane as a helical span at residues 251-269 (GDTFCYFAGMTFAVVGILG). Position 252 (Asp-252) interacts with Mg(2+). Residues 270–271 (HF) are Lumenal-facing. The chain crosses the membrane as a helical span at residues 272–293 (SKTMLLFFIPQVFNFLYSLPQL). The Cytoplasmic segment spans residues 294–375 (LHAIPCPRHR…LLLKIFGPIH (82 aa)). Residue 301–303 (RHR) participates in UDP-N-acetyl-alpha-D-glucosamine binding. A helical membrane pass occupies residues 376 to 400 (ERNLTLLLLLLQILSSAVTFSIRYQ). Residues 401 to 408 (LVRLFYDV) lie on the Lumenal side of the membrane.

It belongs to the glycosyltransferase 4 family. In terms of assembly, homodimer. Mg(2+) serves as cofactor.

It localises to the endoplasmic reticulum membrane. It carries out the reaction a di-trans,poly-cis-dolichyl phosphate + UDP-N-acetyl-alpha-D-glucosamine = an N-acetyl-alpha-D-glucosaminyl-diphospho-di-trans,poly-cis-dolichol + UMP. The protein operates within protein modification; protein glycosylation. Inhibited by natural nucleoside antibiotic tunicamycin, which acts as a structural analog and competitor of UDP-GlcNAc. Functionally, UDP-N-acetylglucosamine--dolichyl-phosphate N-acetylglucosaminephosphotransferase that operates in the biosynthetic pathway of dolichol-linked oligosaccharides, the glycan precursors employed in protein asparagine (N)-glycosylation. The assembly of dolichol-linked oligosaccharides begins on the cytosolic side of the endoplasmic reticulum membrane and finishes in its lumen. The sequential addition of sugars to dolichol pyrophosphate produces dolichol-linked oligosaccharides containing fourteen sugars, including two GlcNAcs, nine mannoses and three glucoses. Once assembled, the oligosaccharide is transferred from the lipid to nascent proteins by oligosaccharyltransferases. Catalyzes the initial step of dolichol-linked oligosaccharide biosynthesis, transfering GlcNAc-1-P from cytosolic UDP-GlcNAc onto the carrier lipid dolichyl phosphate (P-dolichol), yielding GlcNAc-P-P-dolichol embedded in the cytoplasmic leaflet of the endoplasmic reticulum membrane. This chain is UDP-N-acetylglucosamine--dolichyl-phosphate N-acetylglucosaminephosphotransferase (DPAGT1), found in Cricetulus longicaudatus (Long-tailed dwarf hamster).